Consider the following 557-residue polypeptide: 2-succinyl-5-enolpyruvyl-6-hydroxy-3-cyclohexene-1-carboxylate synthase (557 aa).

This sequence belongs to the TPP enzyme family. MenD subfamily. As to quaternary structure, homodimer. It depends on Mg(2+) as a cofactor. Mn(2+) serves as cofactor. Requires thiamine diphosphate as cofactor.

It catalyses the reaction isochorismate + 2-oxoglutarate + H(+) = 5-enolpyruvoyl-6-hydroxy-2-succinyl-cyclohex-3-ene-1-carboxylate + CO2. Its pathway is quinol/quinone metabolism; 1,4-dihydroxy-2-naphthoate biosynthesis; 1,4-dihydroxy-2-naphthoate from chorismate: step 2/7. It participates in quinol/quinone metabolism; menaquinone biosynthesis. Its function is as follows. Catalyzes the thiamine diphosphate-dependent decarboxylation of 2-oxoglutarate and the subsequent addition of the resulting succinic semialdehyde-thiamine pyrophosphate anion to isochorismate to yield 2-succinyl-5-enolpyruvyl-6-hydroxy-3-cyclohexene-1-carboxylate (SEPHCHC). This chain is 2-succinyl-5-enolpyruvyl-6-hydroxy-3-cyclohexene-1-carboxylate synthase, found in Yersinia enterocolitica serotype O:8 / biotype 1B (strain NCTC 13174 / 8081).